A 181-amino-acid chain; its full sequence is MWSLQDSIFTCERNHEGENIIHYLCRNGGVIDLLTFRNAINDENRYLLSEYNRDGKXCMHIVVSQDKVDPINKLMLLMKWGADINSKDQKDGNTVLHIAVLTNNYEVAKWLCQQPGVDMEIINFARKTPYQIACDRANTRMMDLLXKNGARCDVPLKINTARRRASHDYGVKLIRMGESAR.

ANK repeat units follow at residues 54–86 (DGKXCMHIVVSQDKVDPINKLMLLMKWGADINS), 91–121 (DGNTVLHIAVLTNNYEVAKWLCQQPGVDMEI), and 125–154 (ARKTPYQIACDRANTRMMDLLXKNGARCDV).

This sequence belongs to the polydnaviridae I-Kappa-B-like protein family.

Suppresses the host immune response through NF-kappa-B inactivation. Possesses ankyrin repeat domains required for NF-kappa-B binding but lacks the regulatory regions required for dissociation from NF-kappa-B and degradation. Therefore, prevents host NF-kappa-B release and subsequent activation. This is I-Kappa-B like protein C2 (C2) from Microplitis demolitor (Parasitoid wasp).